Here is a 258-residue protein sequence, read N- to C-terminus: Acyl-[acyl-carrier-protein]--UDP-N-acetylglucosamine O-acyltransferase (258 aa).

This sequence belongs to the transferase hexapeptide repeat family. LpxA subfamily. Homotrimer.

Its subcellular location is the cytoplasm. The catalysed reaction is a (3R)-hydroxyacyl-[ACP] + UDP-N-acetyl-alpha-D-glucosamine = a UDP-3-O-[(3R)-3-hydroxyacyl]-N-acetyl-alpha-D-glucosamine + holo-[ACP]. Its pathway is glycolipid biosynthesis; lipid IV(A) biosynthesis; lipid IV(A) from (3R)-3-hydroxytetradecanoyl-[acyl-carrier-protein] and UDP-N-acetyl-alpha-D-glucosamine: step 1/6. Its function is as follows. Involved in the biosynthesis of lipid A, a phosphorylated glycolipid that anchors the lipopolysaccharide to the outer membrane of the cell. This chain is Acyl-[acyl-carrier-protein]--UDP-N-acetylglucosamine O-acyltransferase, found in Pseudomonas savastanoi pv. phaseolicola (strain 1448A / Race 6) (Pseudomonas syringae pv. phaseolicola (strain 1448A / Race 6)).